We begin with the raw amino-acid sequence, 347 residues long: Bifunctional methylenetetrahydrofolate dehydrogenase/cyclohydrolase 2, mitochondrial (347 aa).

Substrate contacts are provided by residues 98-102 (YVRNK) and 145-147 (VQL). NAD(+) contacts are provided by residues 214 to 216 (GRS) and R247. Position 323–327 (323–327 (PGGVG)) interacts with substrate.

This sequence belongs to the tetrahydrofolate dehydrogenase/cyclohydrolase family. The cofactor is Mg(2+). As to expression, isoform 1, isoform 4 and isoform 5 are expressed in brain and placenta.

It localises to the mitochondrion inner membrane. The enzyme catalyses (6R)-5,10-methylene-5,6,7,8-tetrahydrofolate + NAD(+) = (6R)-5,10-methenyltetrahydrofolate + NADH. It carries out the reaction (6R)-5,10-methenyltetrahydrofolate + H2O = (6R)-10-formyltetrahydrofolate + H(+). It catalyses the reaction (6R)-5,10-methylene-5,6,7,8-tetrahydrofolate + NADP(+) = (6R)-5,10-methenyltetrahydrofolate + NADPH. It functions in the pathway one-carbon metabolism; tetrahydrofolate interconversion. In terms of biological role, bifunctional mitochondrial folate-interconverting enzyme that has both NAD/NADP-dependent methylenetetrahydrofolate dehydrogenase and methenyltetrahydrofolate cyclohydrolase activities. In Homo sapiens (Human), this protein is Bifunctional methylenetetrahydrofolate dehydrogenase/cyclohydrolase 2, mitochondrial.